The following is a 312-amino-acid chain: MISNAPMHLWQGRIDLAEGLAARRWHQWVQPWAEQQPAGIALLGLACDEGVKRNQGRTGASQGPAALRAALANLAWHGTGPLYDAGDVTCTDHHLESAQKRYAERLGLLLEQGHLVLGLGGGHEIAFASFSGLADHLRRQQPCPRIGILNFDAHFDLRHAPQSSSGTPFRQIAEYCRQAGMPFEYCCLGVSELSNTQALFEQARELDVRYLLDRQMQGWNLPAVEACLDAFLDGIDVLYMTLCLDVLPASQAPGVSAPSAHGVDVQVVEHLVRRARASGKLRVADIAELNPGLDQDQRTARVAARLLASLIH.

Residues His123, Asp152, His154, Asp156, Cys243, and Asp245 each coordinate Mn(2+).

The protein belongs to the arginase family. The cofactor is Mn(2+).

It catalyses the reaction N-formimidoyl-L-glutamate + H2O = formamide + L-glutamate. It participates in amino-acid degradation; L-histidine degradation into L-glutamate; L-glutamate from N-formimidoyl-L-glutamate (hydrolase route): step 1/1. Functionally, catalyzes the conversion of N-formimidoyl-L-glutamate to L-glutamate and formamide. In Pseudomonas fluorescens (strain ATCC BAA-477 / NRRL B-23932 / Pf-5), this protein is Formimidoylglutamase.